The chain runs to 601 residues: MLQQWLRQSPGAARFLRGSCCRGPQSGSLRHSPLPTAPHRCIRSLQTSATESKEHIPLRKQLKQNAKALKAQKRQKRESEEASRQKWELTVGIEIHAQLNTETKLFSRASTSNTDTPNSNVALFDLAFPGSQPEFQATTLLPALRAAIALNCDIQPVSRFDRKHYFYHDQPAGYQITQYYAPFAKNGYVDLFPHDGIAPEDGDHVRIGIKQIQLEQDTAKSQEYPPSTQLLDFNRVSHPLIEIITMPQIHNPATAAACVRKIQAILQSCSAVTTGMELGGLRADVNVSIRRRDEAPGTHQYGGIGGLGQRTEIKNLSSFKAVEDAVIAEKNRQIAVLESGGVIEGETRGWTIGSTETRKLRGKEGEVDYRYMPDPDLPPLIISHDLVSGLRDSLPTPPDQLIEMLAGPEYGLSIEDAKPLIELDDGARLEYYQDVVDILRDLQQDQDAKSRAGLARMAGNWVLHELGGLCAKADLAWDAQRVPAETLAQIIDQLQRKRITGATAKQVLAMVFDGDRRPVPQLLEAENLLLRPLSRDEYIALAEAAISQNPQMVEQIRAKNQLGKLGWFVGQMMRMGEKGRVEAQKADEILRELILGKSDQP.

The transit peptide at 1-52 (MLQQWLRQSPGAARFLRGSCCRGPQSGSLRHSPLPTAPHRCIRSLQTSATES) directs the protein to the mitochondrion.

This sequence belongs to the GatB/GatE family. GatB subfamily. In terms of assembly, subunit of the heterotrimeric GatCAB amidotransferase (AdT) complex, composed of A, B and C subunits.

It is found in the mitochondrion. It carries out the reaction L-glutamyl-tRNA(Gln) + L-glutamine + ATP + H2O = L-glutaminyl-tRNA(Gln) + L-glutamate + ADP + phosphate + H(+). In terms of biological role, allows the formation of correctly charged Gln-tRNA(Gln) through the transamidation of misacylated Glu-tRNA(Gln) in the mitochondria. The reaction takes place in the presence of glutamine and ATP through an activated gamma-phospho-Glu-tRNA(Gln). The sequence is that of Glutamyl-tRNA(Gln) amidotransferase subunit B, mitochondrial from Neosartorya fischeri (strain ATCC 1020 / DSM 3700 / CBS 544.65 / FGSC A1164 / JCM 1740 / NRRL 181 / WB 181) (Aspergillus fischerianus).